We begin with the raw amino-acid sequence, 198 residues long: Holliday junction resolvase RecU (198 aa).

The tract at residues 1-22 (MVNYPHKLSSQKRQTSLSQPKN) is disordered. Over residues 11–22 (QKRQTSLSQPKN) the composition is skewed to polar residues. Mg(2+) contacts are provided by Thr-81, Asp-83, Glu-96, and Gln-115.

This sequence belongs to the RecU family. The cofactor is Mg(2+).

Its subcellular location is the cytoplasm. The catalysed reaction is Endonucleolytic cleavage at a junction such as a reciprocal single-stranded crossover between two homologous DNA duplexes (Holliday junction).. Endonuclease that resolves Holliday junction intermediates in genetic recombination. Cleaves mobile four-strand junctions by introducing symmetrical nicks in paired strands. Promotes annealing of linear ssDNA with homologous dsDNA. Required for DNA repair, homologous recombination and chromosome segregation. This chain is Holliday junction resolvase RecU, found in Streptococcus pneumoniae (strain Hungary19A-6).